Here is a 380-residue protein sequence, read N- to C-terminus: Transcription factor RF2a (380 aa).

The interval 1–57 (MNREKSPIPGDGGDGLPPQATRRAGPPAAAAAAEYDISRMPDFPTRNPGHRRAHSEI) is disordered. Residues 16–33 (LPPQATRRAGPPAAAAAA) show a composition bias toward low complexity. Positions 56–108 (EILSLPEDLDLCAAGGGDGPSLSDENDEELFSMFLDVEKLNSTCGASSEAEAE) are activation of RTBV promoter. One can recognise a bZIP domain in the interval 181–244 (DPKRAKRIWA…SGLTTENSEL (64 aa)). The basic motif stretch occupies residues 183-204 (KRAKRIWANRQSAARSKERKMR). The interval 209 to 244 (LERKVQTLQTEATTLSAQLALLQRDTSGLTTENSEL) is leucine-zipper. Positions 283 to 357 (GGMMMNFGGM…AQQLQQAARD (75 aa)) are interaction with TBP2. Over residues 326 to 355 (QAQQQQVLHPQHQQQQPLHPLQAQQLQQAA) the composition is skewed to low complexity. The disordered stretch occupies residues 326–380 (QAQQQQVLHPQHQQQQPLHPLQAQQLQQAARDLKMKSPMGGQSQWGDGKSGSSGN).

The protein belongs to the bZIP family. In terms of assembly, binds DNA as a homodimer or as a heterodimer with RF2b. The heterodimer binds stronger to DNA than the homodimer. Interacts with TBP2. In terms of tissue distribution, expressed at high levels in levels in leaf sheath, moderate levels in leaf blade, but not in roots. Predominantly expressed in vascular tissues.

Its subcellular location is the nucleus. Functionally, transcription factor probably involved in vascular development and shoot tissue organization. Binds to the DNA sequence 5'-CCGAGTGTGCCCCTGG-3' present in the promoter region Box II of the phloem-specific rice tungro bacilliform virus (RTBV) promoter. May regulate tissue-specific expression of the RTBV promoter and virus replication. This is Transcription factor RF2a (RF2a) from Oryza sativa subsp. japonica (Rice).